The chain runs to 360 residues: Peptide chain release factor 1 (360 aa).

Position 235 is an N5-methylglutamine (Q235). The tract at residues K285–P313 is disordered.

This sequence belongs to the prokaryotic/mitochondrial release factor family. In terms of processing, methylated by PrmC. Methylation increases the termination efficiency of RF1.

The protein resides in the cytoplasm. Functionally, peptide chain release factor 1 directs the termination of translation in response to the peptide chain termination codons UAG and UAA. This chain is Peptide chain release factor 1, found in Salmonella paratyphi A (strain ATCC 9150 / SARB42).